The following is a 295-amino-acid chain: Indole-3-glycerol phosphate synthase (295 aa).

It belongs to the TrpC family.

The enzyme catalyses 1-(2-carboxyphenylamino)-1-deoxy-D-ribulose 5-phosphate + H(+) = (1S,2R)-1-C-(indol-3-yl)glycerol 3-phosphate + CO2 + H2O. The protein operates within amino-acid biosynthesis; L-tryptophan biosynthesis; L-tryptophan from chorismate: step 4/5. The protein is Indole-3-glycerol phosphate synthase of Prochlorococcus marinus (strain MIT 9515).